Consider the following 253-residue polypeptide: Indole-3-glycerol phosphate synthase (253 aa).

It belongs to the TrpC family.

It catalyses the reaction 1-(2-carboxyphenylamino)-1-deoxy-D-ribulose 5-phosphate + H(+) = (1S,2R)-1-C-(indol-3-yl)glycerol 3-phosphate + CO2 + H2O. It participates in amino-acid biosynthesis; L-tryptophan biosynthesis; L-tryptophan from chorismate: step 4/5. The chain is Indole-3-glycerol phosphate synthase from Petrotoga mobilis (strain DSM 10674 / SJ95).